The primary structure comprises 205 residues: Small ribosomal subunit protein mS26 (205 aa).

A mitochondrion-targeting transit peptide spans 1–26 (MLRALSTLGARPLGRPPAQFLLLARG).

Belongs to the mitochondrion-specific ribosomal protein mS26 family. Component of the mitochondrial ribosome small subunit (28S) which comprises a 12S rRNA and about 30 distinct proteins.

It is found in the mitochondrion. In Bos taurus (Bovine), this protein is Small ribosomal subunit protein mS26 (MRPS26).